A 159-amino-acid polypeptide reads, in one-letter code: RNA pyrophosphohydrolase (159 aa).

A Nudix hydrolase domain is found at 6 to 149; sequence GFRPNVGIIL…KREVYRRALK (144 aa). The Nudix box motif lies at 38–59; sequence GGINPDETPEDALYRELNEEVG.

This sequence belongs to the Nudix hydrolase family. RppH subfamily. A divalent metal cation serves as cofactor.

Accelerates the degradation of transcripts by removing pyrophosphate from the 5'-end of triphosphorylated RNA, leading to a more labile monophosphorylated state that can stimulate subsequent ribonuclease cleavage. The chain is RNA pyrophosphohydrolase from Pseudomonas entomophila (strain L48).